The following is a 731-amino-acid chain: Wall-associated receptor kinase-like 5 (731 aa).

A signal peptide spans 1–26 (MKTKTYRFVCLVASVLTLQLMNGSSA). Residues 27 to 360 (ATPPPPPNSK…PAKPLVLQGV (334 aa)) are Extracellular-facing. Residues Asn37, Asn43, Asn73, Asn96, Asn124, Asn137, Asn236, and Asn272 are each glycosylated (N-linked (GlcNAc...) asparagine). An atypical EGF-like region spans residues 285-342 (CLCEYGYFSEMSYRNCYCSLGFTGNPYLRGGCIDNDDCKGPNICEEGTCVNVPGGYRC). Cystine bridges form between Cys287/Cys300, Cys322/Cys333, and Cys328/Cys342. A helical membrane pass occupies residues 361-381 (LLGLMGLLFLVVGTLGLIIFI). Residues 382–731 (KKRRRIISSR…EDQVMEISRE (350 aa)) lie on the Cytoplasmic side of the membrane. The Protein kinase domain maps to 432 to 705 (FSVKRVLGKG…REASLELERI (274 aa)). ATP is bound by residues 438-446 (LGKGSQGTV) and Lys460. At Tyr505 the chain carries Phosphotyrosine. Residue Asp557 is the Proton acceptor of the active site. Phosphothreonine occurs at positions 591 and 596. Tyr604 carries the phosphotyrosine modification. Positions 709–731 (PEDLEAHIENDDEEDQVMEISRE) are disordered.

Belongs to the protein kinase superfamily. Ser/Thr protein kinase family. Preferentially expressed in roots and flowers.

Its subcellular location is the membrane. It carries out the reaction L-seryl-[protein] + ATP = O-phospho-L-seryl-[protein] + ADP + H(+). The catalysed reaction is L-threonyl-[protein] + ATP = O-phospho-L-threonyl-[protein] + ADP + H(+). In terms of biological role, serine/threonine-protein kinase that may function as a signaling receptor of extracellular matrix component. May be involved in plant's response to pathogen infection. The chain is Wall-associated receptor kinase-like 5 (WAKL5) from Arabidopsis thaliana (Mouse-ear cress).